A 160-amino-acid chain; its full sequence is 3-hydroxyacyl-[acyl-carrier-protein] dehydratase FabZ (160 aa).

The active site involves His63.

Belongs to the thioester dehydratase family. FabZ subfamily.

Its subcellular location is the cytoplasm. It catalyses the reaction a (3R)-hydroxyacyl-[ACP] = a (2E)-enoyl-[ACP] + H2O. Functionally, involved in unsaturated fatty acids biosynthesis. Catalyzes the dehydration of short chain beta-hydroxyacyl-ACPs and long chain saturated and unsaturated beta-hydroxyacyl-ACPs. This chain is 3-hydroxyacyl-[acyl-carrier-protein] dehydratase FabZ, found in Xylella fastidiosa (strain M23).